The following is a 1102-amino-acid chain: Phosphatidylinositol 4,5-bisphosphate 3-kinase catalytic subunit gamma isoform (1102 aa).

Positions 34–141 (SMELIPIEFV…PGQIHLVQRH (108 aa)) constitute a PI3K-ABD domain. Residues 217-309 (NNCIFIVIHR…GEEIHVVLDT (93 aa)) form the PI3K-RBD domain. The 165-residue stretch at 357–521 (CDRKFRVKIR…NSMSISILLD (165 aa)) folds into the C2 PI3K-type domain. Residues 541-723 (DRVRAEMPNQ…AVILEAYLRG (183 aa)) form the PIK helical domain. The PI3K/PI4K catalytic domain maps to 797–1080 (AIEKCKVMAS…QIEVCRDKGW (284 aa)). The interval 803 to 809 (VMASKKK) is G-loop. Residues 829-838 (GIIFKHGDDL) and 864-872 (LLPYGCIST) contribute to the ATP site. The interval 943–951 (GIGDRHNDN) is catalytic loop. Residue 961–969 (FHIDFGHIL) participates in ATP binding. The activation loop stretch occupies residues 962-988 (HIDFGHILGNYKSFLGINKERVPFVLT). Thr-1024 is subject to Phosphothreonine; by PKA. Ser-1101 is subject to Phosphoserine; by autocatalysis.

The protein belongs to the PI3/PI4-kinase family. As to quaternary structure, heterodimer of a catalytic subunit PIK3CG and a PIK3R5 or PIK3R6 regulatory subunit. Interacts with GRK2 through the PIK helical domain. Interaction with GRK2 is required for targeting to agonist-occupied receptor. Interacts with PDE3B; regulates PDE3B activity and thereby cAMP levels in cells. Interacts with TPM2. Interacts with EPHA8; regulates integrin-mediated cell adhesion to substrate. Interacts with HRAS; the interaction is required for membrane recruitment and beta-gamma G protein dimer-dependent activation of the PI3K gamma complex PIK3CG:PIK3R6. Autophosphorylation at Ser-1101 has no effect on the phosphatidylinositol-4,5-bisphosphate 3-kinase activity. Pancreas, skeletal muscle, liver and heart.

The protein resides in the cytoplasm. It is found in the cell membrane. It carries out the reaction a 1,2-diacyl-sn-glycero-3-phospho-(1D-myo-inositol) + ATP = a 1,2-diacyl-sn-glycero-3-phospho-(1D-myo-inositol-3-phosphate) + ADP + H(+). The enzyme catalyses a 1,2-diacyl-sn-glycero-3-phospho-(1D-myo-inositol-4,5-bisphosphate) + ATP = a 1,2-diacyl-sn-glycero-3-phospho-(1D-myo-inositol-3,4,5-trisphosphate) + ADP + H(+). It catalyses the reaction a 1,2-diacyl-sn-glycero-3-phospho-(1D-myo-inositol 4-phosphate) + ATP = a 1,2-diacyl-sn-glycero-3-phospho-(1D-myo-inositol-3,4-bisphosphate) + ADP + H(+). The catalysed reaction is L-seryl-[protein] + ATP = O-phospho-L-seryl-[protein] + ADP + H(+). It participates in phospholipid metabolism; phosphatidylinositol phosphate biosynthesis. With respect to regulation, activated by both the alpha and the beta-gamma G proteins following stimulation of G protein-coupled receptors (GPCRs). Activation by GPCRs is assisted by the regulatory subunits (PIK3R5 or PIK3R6) leading to the translocation from the cytosol to the plasma membrane and to kinase activation. Inhibited by AS-604850 and AS-605240. Phosphoinositide-3-kinase (PI3K) that phosphorylates PtdIns(4,5)P2 (Phosphatidylinositol 4,5-bisphosphate) to generate phosphatidylinositol 3,4,5-trisphosphate (PIP3). PIP3 plays a key role by recruiting PH domain-containing proteins to the membrane, including AKT1 and PDPK1, activating signaling cascades involved in cell growth, survival, proliferation, motility and morphology. Links G-protein coupled receptor activation to PIP3 production. Involved in immune, inflammatory and allergic responses. Modulates leukocyte chemotaxis to inflammatory sites and in response to chemoattractant agents. May control leukocyte polarization and migration by regulating the spatial accumulation of PIP3 and by regulating the organization of F-actin formation and integrin-based adhesion at the leading edge. Controls motility of dendritic cells. Together with PIK3CD is involved in natural killer (NK) cell development and migration towards the sites of inflammation. Participates in T-lymphocyte migration. Regulates T-lymphocyte proliferation, activation, and cytokine production. Together with PIK3CD participates in T-lymphocyte development. Required for B-lymphocyte development and signaling. Together with PIK3CD participates in neutrophil respiratory burst. Together with PIK3CD is involved in neutrophil chemotaxis and extravasation. Together with PIK3CB promotes platelet aggregation and thrombosis. Regulates alpha-IIb/beta-3 integrins (ITGA2B/ ITGB3) adhesive function in platelets downstream of P2Y12 through a lipid kinase activity-independent mechanism. May have also a lipid kinase activity-dependent function in platelet aggregation. Involved in endothelial progenitor cell migration. Negative regulator of cardiac contractility. Modulates cardiac contractility by anchoring protein kinase A (PKA) and PDE3B activation, reducing cAMP levels. Regulates cardiac contractility also by promoting beta-adrenergic receptor internalization by binding to GRK2 and by non-muscle tropomyosin phosphorylation. Also has serine/threonine protein kinase activity: both lipid and protein kinase activities are required for beta-adrenergic receptor endocytosis. May also have a scaffolding role in modulating cardiac contractility. Contributes to cardiac hypertrophy under pathological stress. Through simultaneous binding of PDE3B to RAPGEF3 and PIK3R6 is assembled in a signaling complex in which the PI3K gamma complex is activated by RAPGEF3 and which is involved in angiogenesis. In neutrophils, participates in a phospholipase C-activating N-formyl peptide-activated GPCR (G protein-coupled receptor) signaling pathway downstream of RASGRP4-mediated Ras-activation, to promote neutrophil functional responses. The chain is Phosphatidylinositol 4,5-bisphosphate 3-kinase catalytic subunit gamma isoform (PIK3CG) from Homo sapiens (Human).